The chain runs to 342 residues: Methylthioribose-1-phosphate isomerase (342 aa).

Residues Arg-49–Ala-51, Arg-86, and Gln-187 each bind substrate. The active-site Proton donor is Asp-228. Residue Asn-238–Lys-239 participates in substrate binding.

It belongs to the eIF-2B alpha/beta/delta subunits family. MtnA subfamily.

It catalyses the reaction 5-(methylsulfanyl)-alpha-D-ribose 1-phosphate = 5-(methylsulfanyl)-D-ribulose 1-phosphate. It functions in the pathway amino-acid biosynthesis; L-methionine biosynthesis via salvage pathway; L-methionine from S-methyl-5-thio-alpha-D-ribose 1-phosphate: step 1/6. Its function is as follows. Catalyzes the interconversion of methylthioribose-1-phosphate (MTR-1-P) into methylthioribulose-1-phosphate (MTRu-1-P). The sequence is that of Methylthioribose-1-phosphate isomerase from Serratia proteamaculans (strain 568).